The sequence spans 68 residues: MPQKDPCQKQACEIQKCLQANSYMESKCQAVIQELRKCCAQYPKGRSVVCSGFEKEEEENLTRKSASK.

The 43-residue stretch at 4 to 46 (KDPCQKQACEIQKCLQANSYMESKCQAVIQELRKCCAQYPKGR) folds into the CHCH domain. 2 consecutive short sequence motifs (cx9C motif) follow at residues 7 to 17 (CQKQACEIQKC) and 28 to 38 (CQAVIQELRKC). 3 cysteine pairs are disulfide-bonded: Cys-7–Cys-38, Cys-17–Cys-28, and Cys-39–Cys-50.

It belongs to the CMC4 family. In terms of tissue distribution, expressed in many tissues with a relatively high level in skeletal muscle.

The protein localises to the mitochondrion. The protein is Cx9C motif-containing protein 4 (CMC4) of Homo sapiens (Human).